A 1262-amino-acid chain; its full sequence is Putative late blight resistance protein homolog R1B-23 (1262 aa).

Coiled coils occupy residues 364-384 (DSLA…ESMQ) and 475-496 (RMNE…KLLN). The 287-residue stretch at 475 to 761 (RMNEEIVGFE…ISESFIKSCE (287 aa)) folds into the NB-ARC domain. Residue 508 to 515 (GMPGLGKT) coordinates ATP. 6 LRR repeats span residues 890-914 (FKFL…LFYL), 933-961 (LWNL…VWDM), 1036-1059 (PIRL…CISA), 1064-1083 (YLEL…TADH), 1084-1112 (LKHL…MFPQ), and 1133-1157 (FPNL…FMDI). The HMA domain occupies 1181-1248 (ETQVEDNQNT…KLRNVAYADE (68 aa)).

Belongs to the disease resistance NB-LRR family.

It is found in the cytoplasm. The protein resides in the membrane. Confers resistance to late blight (Phytophthora infestans) races carrying the avirulence gene Avr1. Resistance proteins guard the plant against pathogens that contain an appropriate avirulence protein via an indirect interaction with this avirulence protein. That triggers a defense system including the hypersensitive response, which restricts the pathogen growth. This chain is Putative late blight resistance protein homolog R1B-23 (R1B-23), found in Solanum demissum (Wild potato).